A 97-amino-acid polypeptide reads, in one-letter code: Meromycolate extension acyl carrier protein (97 aa).

The region spanning 3–81 (ASQQEIIAGL…DVVAYIQKLE (79 aa)) is the Carrier domain. Ser-41 is modified (O-(pantetheine 4'-phosphoryl)serine).

The protein belongs to the acyl carrier protein (ACP) family. In terms of processing, 4'-phosphopantetheine is transferred from CoA to a specific serine of apo-AcpM.

The protein localises to the cytoplasm. Its function is as follows. Acyl carrier protein involved in meromycolate extension. The sequence is that of Meromycolate extension acyl carrier protein (acpM) from Mycolicibacterium aurum (Mycobacterium aurum).